A 311-amino-acid polypeptide reads, in one-letter code: MAEKTANDLKLSEIELVDFRIYGMQEGVPYEGIYGINVAKVQEIIPMPTLFEYPTNLDYIIGVFDLRSIIIPLIDLAKWIGIIPDKSKENEKIVIITEFNNVKMGFLVHSARRIRRISWKDVEPASFSASNSINKENITGTTRIENDKTLLILDLESILDDLKLNEDAKNAKDTHKERFEGEVLFLDDSKTARKTLKNHLSKLGFSITEAVDGEDGLNKLEMLFKKYGDDLRKHLKFIISDVEMPKMDGYHFLFKLQKDPRFAYIPVIFNSSICDNYSAERAKEMGAVAYLVKFDAEKFTEEISKILDKNA.

The CheW-like domain maps to glutamate 13–leucine 164. One can recognise a Response regulatory domain in the interval glutamate 182–aspartate 308. Aspartate 241 bears the 4-aspartylphosphate mark.

Plays a role in chemotaxis signal transduction system in order to colonize the host stomach. May act as a phosphate sink to control the flow of phosphate to CheAY. The sequence is that of Chemotaxis protein CheV3 from Helicobacter pylori (strain ATCC 700392 / 26695) (Campylobacter pylori).